Here is a 513-residue protein sequence, read N- to C-terminus: GMP synthase [glutamine-hydrolyzing] (513 aa).

The Glutamine amidotransferase type-1 domain occupies 5–195 (LVLVIDFGGQ…VYNICGCTGD (191 aa)). The active-site Nucleophile is the Cys82. Residues His169 and Glu171 contribute to the active site. One can recognise a GMPS ATP-PPase domain in the interval 196–388 (WKMDSFVEKT…LGIPEKLVFR (193 aa)). Residue 223-229 (SGGVDSS) participates in ATP binding.

Homodimer.

It catalyses the reaction XMP + L-glutamine + ATP + H2O = GMP + L-glutamate + AMP + diphosphate + 2 H(+). The protein operates within purine metabolism; GMP biosynthesis; GMP from XMP (L-Gln route): step 1/1. Its function is as follows. Catalyzes the synthesis of GMP from XMP. This is GMP synthase [glutamine-hydrolyzing] from Clostridium botulinum (strain Eklund 17B / Type B).